A 380-amino-acid chain; its full sequence is MESEFPDTDEPVWILGRQHHLNEDKSKLLLDVSARLWFTYRRKFSPIGGTGPSSDAGWGCMLRCGQMMLAQALICRHLGRDWQWEKHKKQPEEYHRILHCFLDRKDCCYSIHQMAQMGVGEGKSIGEWFGPNTVAQVLKKLALFDEWNSLAVYVSMDNTVVIEDIKKMCRSPPQSSSTAHSSAHLHRSALGRNRNAAGLCTGWKPLLLIIPLRLGINHINPVYIDAFKECFKMPQSLGALGGKPNNAYYFIGFLGNELIYLDPHTTQSFVDSEENGTVDDQSFHCQQAPHRMKIMNLDPSVALGFFCKEECDFDNWCSLVQKEILKQQSLRMFELVQKHPPHWPPFIPPTKPEVTTTGAELIESTDKLFELEEEFEILSV.

C60 (nucleophile) is an active-site residue. Residues D262 and H264 contribute to the active site. The LIR signature appears at F375 to L378.

This sequence belongs to the peptidase C54 family.

The protein resides in the cytoplasm. The enzyme catalyses [protein]-C-terminal L-amino acid-glycyl-phosphatidylethanolamide + H2O = [protein]-C-terminal L-amino acid-glycine + a 1,2-diacyl-sn-glycero-3-phosphoethanolamine. Functionally, cysteine protease that plays a key role in autophagy by mediating both proteolytic activation and delipidation of ATG8 family proteins. The protease activity is required for proteolytic activation of ATG8 family proteins: cleaves the C-terminal amino acid of ATG8 proteins to reveal a C-terminal glycine. Exposure of the glycine at the C-terminus is essential for ATG8 proteins conjugation to phosphatidylethanolamine (PE) and insertion to membranes, which is necessary for autophagy. Protease activity is also required to counteract formation of high-molecular weight conjugates of ATG8 proteins (ATG8ylation): acts as a deubiquitinating-like enzyme that removes ATG8 conjugated to other proteins, such as ATG3. In addition to the protease activity, also mediates delipidation of ATG8 family proteins. Catalyzes delipidation of PE-conjugated forms of ATG8 proteins during macroautophagy. The polypeptide is Cysteine protease ATG4A (Gallus gallus (Chicken)).